The primary structure comprises 161 residues: ATP synthase subunit b (161 aa).

Residues 2 to 22 (VIEWGTALYQLLAFAVLLLIL) form a helical membrane-spanning segment.

Belongs to the ATPase B chain family. As to quaternary structure, F-type ATPases have 2 components, F(1) - the catalytic core - and F(0) - the membrane proton channel. F(1) has five subunits: alpha(3), beta(3), gamma(1), delta(1), epsilon(1). F(0) has three main subunits: a(1), b(2) and c(10-14). The alpha and beta chains form an alternating ring which encloses part of the gamma chain. F(1) is attached to F(0) by a central stalk formed by the gamma and epsilon chains, while a peripheral stalk is formed by the delta and b chains.

The protein localises to the cell membrane. Its function is as follows. F(1)F(0) ATP synthase produces ATP from ADP in the presence of a proton or sodium gradient. F-type ATPases consist of two structural domains, F(1) containing the extramembraneous catalytic core and F(0) containing the membrane proton channel, linked together by a central stalk and a peripheral stalk. During catalysis, ATP synthesis in the catalytic domain of F(1) is coupled via a rotary mechanism of the central stalk subunits to proton translocation. Functionally, component of the F(0) channel, it forms part of the peripheral stalk, linking F(1) to F(0). In Shouchella clausii (strain KSM-K16) (Alkalihalobacillus clausii), this protein is ATP synthase subunit b.